Reading from the N-terminus, the 352-residue chain is MTIAVGRAPQERGWFDVLDDWLKRDRFVFVGWSGILLFPCAFMALGGWLTGTTFVTSWYTHGLASSYLEGCNFLTVAVSSPADSLGHSLLFLWGPEANWNFARWCQLGGLWSFVALHGAFGLIGFMLRQFEIARLVGIRPYNAIAFSGPIAVFVSVFLMYPLGQSSWFFAPSFGVAGIFRFILFLQGFHNWTLNPFHMMGVAGILGGALLCAIHGATVENTLFEDSDQANTFRAFEPTQAEETYSMVTANRFWSQIFGIAFSNKRWLHFFMLFVPVTGLWMSSVGIVGLALNLRAYDFVSQEIRAAEDPEFETFYTKNILLNEGMRAWMAPQDQIHEQFVFPEEVLPRGNAL.

The chain crosses the membrane as a helical span at residues 40-60 (CAFMALGGWLTGTTFVTSWYT). Chlorophyll a is bound at residue H117. A helical transmembrane segment spans residues 124 to 140 (GFMLRQFEIARLVGIRP). Q129 and N142 together coordinate pheophytin a. A helical membrane pass occupies residues 152 to 165 (VFVSVFLMYPLGQS). A chlorophyll a-binding site is contributed by H197. The chain crosses the membrane as a helical span at residues 207 to 227 (GALLCAIHGATVENTLFEDSD). Residues H214 and F261 each contribute to the a plastoquinone site. H214 is a Fe cation binding site. H268 contacts Fe cation. A helical transmembrane segment spans residues 278–294 (GLWMSSVGIVGLALNLR).

It belongs to the reaction center PufL/M/PsbA/D family. As to quaternary structure, PSII is composed of 1 copy each of membrane proteins PsbA, PsbB, PsbC, PsbD, PsbE, PsbF, PsbH, PsbI, PsbJ, PsbK, PsbL, PsbM, PsbT, PsbX, PsbY, PsbZ, Psb30/Ycf12, peripheral proteins PsbO, CyanoQ (PsbQ), PsbU, PsbV and a large number of cofactors. It forms dimeric complexes. It depends on The D1/D2 heterodimer binds P680, chlorophylls that are the primary electron donor of PSII, and subsequent electron acceptors. It shares a non-heme iron and each subunit binds pheophytin, quinone, additional chlorophylls, carotenoids and lipids. There is also a Cl(-1) ion associated with D1 and D2, which is required for oxygen evolution. The PSII complex binds additional chlorophylls, carotenoids and specific lipids. as a cofactor.

The protein localises to the cellular thylakoid membrane. The catalysed reaction is 2 a plastoquinone + 4 hnu + 2 H2O = 2 a plastoquinol + O2. Functionally, photosystem II (PSII) is a light-driven water:plastoquinone oxidoreductase that uses light energy to abstract electrons from H(2)O, generating O(2) and a proton gradient subsequently used for ATP formation. It consists of a core antenna complex that captures photons, and an electron transfer chain that converts photonic excitation into a charge separation. The D1/D2 (PsbA/PsbD) reaction center heterodimer binds P680, the primary electron donor of PSII as well as several subsequent electron acceptors. D2 is needed for assembly of a stable PSII complex. This Picosynechococcus sp. (strain ATCC 27264 / PCC 7002 / PR-6) (Agmenellum quadruplicatum) protein is Photosystem II D2 protein.